Reading from the N-terminus, the 427-residue chain is Trigger factor (427 aa).

Residues 163-248 (GDTVVIDFVG…IHEVKTKEVP (86 aa)) form the PPIase FKBP-type domain.

Belongs to the FKBP-type PPIase family. Tig subfamily.

It localises to the cytoplasm. The catalysed reaction is [protein]-peptidylproline (omega=180) = [protein]-peptidylproline (omega=0). In terms of biological role, involved in protein export. Acts as a chaperone by maintaining the newly synthesized protein in an open conformation. Functions as a peptidyl-prolyl cis-trans isomerase. The protein is Trigger factor of Streptococcus pyogenes serotype M49 (strain NZ131).